The primary structure comprises 383 residues: MTTEGVRTVGVEEEFVLVDPDRHAVRAAASRVLARGDRDGAGGPPGGADPDGDLDGDLDVELTREQVESGSAPHTSLAGLRGSLVGLRRAAARAAEAAGVALAATATCPTPTRPTITPKPRYERMRGEFGLTAREQLTCGCHVHVAVHSRQEAVGALDRLRPWLSVLVAMTANSPFWQGADSGYASYRTQVWQRWPTAGATGAFGSPAEYDRVVDLLIRTGAAMDDGMIYFDVRLSHHYPTLELRVADVCLSVDDSVLLAALARALVATAARQWAAGEPVPTVRPELLRAAGWRASRHGVSGELVDLERGELVPARALVDRFVEWVGPELSATGDGDAVAALVDNLFARGTGADRQRAAYARRGRIDDVVDLVIRETTTMASP.

The disordered stretch occupies residues 35 to 56; sequence RGDRDGAGGPPGGADPDGDLDG.

The protein belongs to the glutamate--cysteine ligase type 2 family. YbdK subfamily.

The enzyme catalyses L-cysteine + L-glutamate + ATP = gamma-L-glutamyl-L-cysteine + ADP + phosphate + H(+). In terms of biological role, ATP-dependent carboxylate-amine ligase which exhibits weak glutamate--cysteine ligase activity. This Frankia alni (strain DSM 45986 / CECT 9034 / ACN14a) protein is Putative glutamate--cysteine ligase 2-2.